We begin with the raw amino-acid sequence, 96 residues long: uncharacterized protein (96 aa).

The first 15 residues, Met1–Ala15, serve as a signal peptide directing secretion.

This is an uncharacterized protein from Caenorhabditis elegans.